The sequence spans 178 residues: Cytochrome b6-f complex iron-sulfur subunit (178 aa).

Residues 20–42 (LLTFGSVTGVALGALYPVANYFI) traverse the membrane as a helical segment. In terms of domain architecture, Rieske spans 65 to 161 (ASGWLSSHPE…VSVENDNVFV (97 aa)). [2Fe-2S] cluster-binding residues include Cys107, His109, Cys125, and His128. A disulfide bridge links Cys112 with Cys127.

It belongs to the Rieske iron-sulfur protein family. The 4 large subunits of the cytochrome b6-f complex are cytochrome b6, subunit IV (17 kDa polypeptide, PetD), cytochrome f and the Rieske protein, while the 4 small subunits are PetG, PetL, PetM and PetN. The complex functions as a dimer. [2Fe-2S] cluster serves as cofactor.

It localises to the cellular thylakoid membrane. The enzyme catalyses 2 oxidized [plastocyanin] + a plastoquinol + 2 H(+)(in) = 2 reduced [plastocyanin] + a plastoquinone + 4 H(+)(out). In terms of biological role, component of the cytochrome b6-f complex, which mediates electron transfer between photosystem II (PSII) and photosystem I (PSI), cyclic electron flow around PSI, and state transitions. The chain is Cytochrome b6-f complex iron-sulfur subunit from Synechococcus sp. (strain CC9605).